Here is a 313-residue protein sequence, read N- to C-terminus: Olfactory receptor 56A5 (313 aa).

The Extracellular portion of the chain corresponds to 1–33 (MTLPSNNSTSPVFEFFLICFPSFQSWQHWLSLP). N-linked (GlcNAc...) asparagine glycans are attached at residues N6 and N7. The helical transmembrane segment at 34–54 (LSLLFLLAMGANATLLITIYL) threads the bilayer. At 55 to 67 (EASLHQPLYYLLS) the chain is on the cytoplasmic side. Residues 68–88 (LLSLLDIVLCLTVIPKVLAIF) form a helical membrane-spanning segment. Residues 89-100 (WFDLRSISFPAC) are Extracellular-facing. An intrachain disulfide couples C100 to C182. The chain crosses the membrane as a helical span at residues 101–121 (FLQVFIMNSFLTMESCTFMIM). Topologically, residues 122–146 (AYDRYVAICKPLQYSSIITDQFVAR) are cytoplasmic. Residues 147–167 (AAIFVVARNGLLTMPIPILSS) form a helical membrane-spanning segment. Over 168 to 203 (RLRYCAGHIIKNCICTNVSVSKLSCDDITLNQSYQF) the chain is Extracellular. 2 N-linked (GlcNAc...) asparagine glycosylation sites follow: N184 and N198. Residues 204-224 (VIGWTLLGSDLILIVLSYFFI) traverse the membrane as a helical segment. Over 225-246 (LKTVLRIKGEGDMAKALGTCGS) the chain is Cytoplasmic. The chain crosses the membrane as a helical span at residues 247–267 (HFILILFFTTVLLVLVITNLA). Residues 268 to 276 (RKRIPPDVP) are Extracellular-facing. The chain crosses the membrane as a helical span at residues 277-297 (ILLNILHHLIPPALNPIVYGV). Residues 298–313 (RTKEIKQGIQNLLRRL) lie on the Cytoplasmic side of the membrane.

Belongs to the G-protein coupled receptor 1 family.

The protein localises to the cell membrane. Functionally, odorant receptor. In Homo sapiens (Human), this protein is Olfactory receptor 56A5 (OR56A5).